The following is a 95-amino-acid chain: Co-chaperonin GroES (95 aa).

This sequence belongs to the GroES chaperonin family. Heptamer of 7 subunits arranged in a ring. Interacts with the chaperonin GroEL.

It localises to the cytoplasm. Its function is as follows. Together with the chaperonin GroEL, plays an essential role in assisting protein folding. The GroEL-GroES system forms a nano-cage that allows encapsulation of the non-native substrate proteins and provides a physical environment optimized to promote and accelerate protein folding. GroES binds to the apical surface of the GroEL ring, thereby capping the opening of the GroEL channel. This is Co-chaperonin GroES from Deinococcus radiodurans (strain ATCC 13939 / DSM 20539 / JCM 16871 / CCUG 27074 / LMG 4051 / NBRC 15346 / NCIMB 9279 / VKM B-1422 / R1).